A 147-amino-acid chain; its full sequence is Peptide methionine sulfoxide reductase MsrB (147 aa).

The 124-residue stretch at 8-131 (KEELKKILTE…NSASLKFIPK (124 aa)) folds into the MsrB domain. The active-site Nucleophile is Cys-120.

This sequence belongs to the MsrB Met sulfoxide reductase family.

The catalysed reaction is L-methionyl-[protein] + [thioredoxin]-disulfide + H2O = L-methionyl-(R)-S-oxide-[protein] + [thioredoxin]-dithiol. This chain is Peptide methionine sulfoxide reductase MsrB, found in Clostridium perfringens (strain SM101 / Type A).